A 258-amino-acid chain; its full sequence is 6-phosphogluconolactonase (258 aa).

The protein belongs to the glucosamine/galactosamine-6-phosphate isomerase family. 6-phosphogluconolactonase subfamily.

The catalysed reaction is 6-phospho-D-glucono-1,5-lactone + H2O = 6-phospho-D-gluconate + H(+). Its pathway is carbohydrate degradation; pentose phosphate pathway; D-ribulose 5-phosphate from D-glucose 6-phosphate (oxidative stage): step 2/3. Functionally, hydrolysis of 6-phosphogluconolactone to 6-phosphogluconate. This chain is 6-phosphogluconolactonase (pgl), found in Chlamydia pneumoniae (Chlamydophila pneumoniae).